Here is a 227-residue protein sequence, read N- to C-terminus: Cell wall mannoprotein CIS3 (227 aa).

The signal sequence occupies residues 1-21 (MQFKNVALAASVAALSATASA). Residues 22–64 (EGYTPGEPWSTLTPTGSISCGAAEYTTTFGIAVQAITSSKAKR) constitute a propeptide that is removed on maturation. The PIR1/2/3 repeat unit spans residues 65-78 (DVISQIGDGQVQAT). O-linked (Man) serine glycosylation is present at serine 68. Threonine 78 is a glycosylation site (O-linked (Man) threonine). The segment covering 83-124 (AQATDSQAQATTTATPTSSEKISSSASKTSTNATSSSCATPS) has biased composition (low complexity). A disordered region spans residues 83-127 (AQATDSQAQATTTATPTSSEKISSSASKTSTNATSSSCATPSLKD). O-linked (Man) serine glycans are attached at residues serine 105, serine 106, serine 107, and serine 109. The O-linked (Man) threonine glycan is linked to threonine 111. O-linked (Man) serine glycosylation occurs at serine 112. O-linked (Man) threonine glycosylation is present at threonine 113. A glycan (N-linked (GlcNAc...) asparagine) is linked at asparagine 114. O-linked (Man) threonine glycosylation is present at threonine 116. O-linked (Man) serine glycosylation is found at serine 117 and serine 118.

Belongs to the PIR protein family. Covalently linked to beta-1,3-glucan of the inner cell wall layer via an alkali-sensitive ester linkage between the gamma-carboxyl group of glutamic acid, arising from Gln-74 within the PIR1/2/3 repeat, and hydroxyl groups of glucoses of beta-1,3-glucan chains. Post-translationally, extensively O-mannosylated. Also N-glycosylated.

The protein localises to the secreted. The protein resides in the cell wall. Functionally, component of the outer cell wall layer. Required for stability of the cell wall and for optimal growth. Required for resistance against several antifungal and cell wall-perturbing agents. This is Cell wall mannoprotein CIS3 (CIS3) from Saccharomyces cerevisiae (strain ATCC 204508 / S288c) (Baker's yeast).